The sequence spans 196 residues: DnaA initiator-associating protein DiaA (196 aa).

Residues 34 to 196 form the SIS domain; sequence LVQSLLNGNK…DNTLFPHQAD (163 aa).

The protein belongs to the SIS family. DiaA subfamily. Homotetramer; dimer of dimers.

Functionally, required for the timely initiation of chromosomal replication via direct interactions with the DnaA initiator protein. This is DnaA initiator-associating protein DiaA from Edwardsiella ictaluri (strain 93-146).